The chain runs to 138 residues: MAVLPDKEKLLRNFTRCANWEEKYLYIIELGQRLAELNPQDRNPQNTIHGCQSQVWIVMRRNANGIIELQGDSDAAIVKGLMAVVFILYHQMTAQDIVHFDVRPWFEKMALAQHLTPSRSQGLEAMIRAIRAKAATLS.

The Cysteine persulfide intermediate role is filled by C51.

Belongs to the SufE family. As to quaternary structure, homodimer. Interacts with SufS.

The protein resides in the cytoplasm. The protein operates within cofactor biosynthesis; iron-sulfur cluster biosynthesis. Functionally, participates in cysteine desulfuration mediated by SufS. Cysteine desulfuration mobilizes sulfur from L-cysteine to yield L-alanine and constitutes an essential step in sulfur metabolism for biosynthesis of a variety of sulfur-containing biomolecules. Functions as a sulfur acceptor for SufS, by mediating the direct transfer of the sulfur atom from the S-sulfanylcysteine of SufS, an intermediate product of cysteine desulfuration process. This is Cysteine desulfuration protein SufE from Salmonella choleraesuis (strain SC-B67).